The sequence spans 66 residues: Large ribosomal subunit protein bL33c (66 aa).

It belongs to the bacterial ribosomal protein bL33 family.

The protein resides in the plastid. It is found in the chloroplast. The polypeptide is Large ribosomal subunit protein bL33c (Adiantum capillus-veneris (Maidenhair fern)).